The chain runs to 264 residues: tRNA (guanine-N(1)-)-methyltransferase (264 aa).

Residues glycine 133 and 152–157 each bind S-adenosyl-L-methionine; that span reads LGDFVM. Residues 240 to 251 show a composition bias toward basic and acidic residues; that stretch reads QRRPDLWRKARG. The tract at residues 240–264 is disordered; it reads QRRPDLWRKARGGEPPADESGEVRR. The segment covering 255 to 264 has biased composition (acidic residues); it reads PADESGEVRR.

It belongs to the RNA methyltransferase TrmD family. Homodimer.

It is found in the cytoplasm. It catalyses the reaction guanosine(37) in tRNA + S-adenosyl-L-methionine = N(1)-methylguanosine(37) in tRNA + S-adenosyl-L-homocysteine + H(+). Specifically methylates guanosine-37 in various tRNAs. This chain is tRNA (guanine-N(1)-)-methyltransferase, found in Sorangium cellulosum (strain So ce56) (Polyangium cellulosum (strain So ce56)).